The sequence spans 55 residues: Large ribosomal subunit protein bL33 (55 aa).

Belongs to the bacterial ribosomal protein bL33 family.

In Deinococcus geothermalis (strain DSM 11300 / CIP 105573 / AG-3a), this protein is Large ribosomal subunit protein bL33.